Here is a 96-residue protein sequence, read N- to C-terminus: Dynein light chain roadblock-type 2 (96 aa).

Ala-2 bears the N-acetylalanine mark.

It belongs to the GAMAD family. Homodimer. The cytoplasmic dynein 1 complex consists of two catalytic heavy chains (HCs) and a number of non-catalytic subunits presented by intermediate chains (ICs), light intermediate chains (LICs) and light chains (LCs); the composition seems to vary in respect to the IC, LIC and LC composition. The heavy chain homodimer serves as a scaffold for the probable homodimeric assembly of the respective non-catalytic subunits. The ICs and LICs bind directly to the HC dimer and the LCs assemble on the IC dimer. Interacts with DYNC1I1 and DYNC1I2. Self-associates. Interacts with DYNLRB1.

Its subcellular location is the cytoplasm. The protein localises to the cytoskeleton. In terms of biological role, acts as one of several non-catalytic accessory components of the cytoplasmic dynein 1 complex that are thought to be involved in linking dynein to cargos and to adapter proteins that regulate dynein function. Cytoplasmic dynein 1 acts as a motor for the intracellular retrograde motility of vesicles and organelles along microtubules. This Bos taurus (Bovine) protein is Dynein light chain roadblock-type 2 (DYNLRB2).